Reading from the N-terminus, the 429-residue chain is Arsenical pump membrane protein (429 aa).

10 helical membrane passes run glycine 21–valine 41, isoleucine 46–isoleucine 66, isoleucine 98–leucine 118, isoleucine 121–methionine 141, valine 178–phenylalanine 198, tryptophan 228–valine 248, serine 249–isoleucine 269, valine 274–tyrosine 294, glycine 316–asparagine 336, and isoleucine 407–phenylalanine 427.

It localises to the cell inner membrane. Functionally, involved in arsenical resistance. Thought to form the channel of an arsenite pump. This is Arsenical pump membrane protein (arsB) from Escherichia coli.